A 207-amino-acid polypeptide reads, in one-letter code: Small ribosomal subunit protein uS4 (207 aa).

Positions 30–51 (DKSKFDSKPGQHGRTSGARTSD) are disordered. Residues 97-157 (SRLDNVVYRM…EKSKKQGRIA (61 aa)) form the S4 RNA-binding domain.

Belongs to the universal ribosomal protein uS4 family. As to quaternary structure, part of the 30S ribosomal subunit. Contacts protein S5. The interaction surface between S4 and S5 is involved in control of translational fidelity.

One of the primary rRNA binding proteins, it binds directly to 16S rRNA where it nucleates assembly of the body of the 30S subunit. Its function is as follows. With S5 and S12 plays an important role in translational accuracy. The polypeptide is Small ribosomal subunit protein uS4 (Verminephrobacter eiseniae (strain EF01-2)).